The following is a 445-amino-acid chain: Putative H/ACA ribonucleoprotein complex subunit 4 (445 aa).

Residues 1-32 (MGKKDKRSKLEGDDLAEAQQKGSFQLPSSNET) form a disordered region. Positions 20–32 (QKGSFQLPSSNET) are enriched in polar residues. The active-site Nucleophile is the Asp113. The PUA domain maps to 284 to 359 (HKRVVVKDSC…VVAKSKRVIM (76 aa)). Residues 386–445 (LDKFGKPNDTTPKSWAKEYVQTSTKKEVKKEETPDEEEEEAPKKKSKKSKKQESSDSDSD) are disordered.

It belongs to the pseudouridine synthase TruB family. Component of the small nucleolar ribonucleoprotein particle containing H/ACA-type snoRNAs (H/ACA snoRNPs).

The protein resides in the nucleus. It is found in the nucleolus. It catalyses the reaction a uridine in RNA = a pseudouridine in RNA. Functionally, plays a central role in ribosomal RNA processing. Probable catalytic subunit of H/ACA small nucleolar ribonucleoprotein (H/ACA snoRNP) complex, which catalyzes pseudouridylation of rRNA. This involves the isomerization of uridine such that the ribose is subsequently attached to C5, instead of the normal N1. Pseudouridine ('psi') residues may serve to stabilize the conformation of rRNAs. In Caenorhabditis elegans, this protein is Putative H/ACA ribonucleoprotein complex subunit 4.